Here is a 78-residue protein sequence, read N- to C-terminus: Large ribosomal subunit protein bL28 (78 aa).

Belongs to the bacterial ribosomal protein bL28 family.

The polypeptide is Large ribosomal subunit protein bL28 (Azoarcus sp. (strain BH72)).